Here is a 1297-residue protein sequence, read N- to C-terminus: Phosphoribosylformylglycinamidine synthase (1297 aa).

Residues 307 to 318 (GASTGSGGEIRD) and alanine 678 each bind ATP. Residues glutamate 718, asparagine 722, and aspartate 886 each coordinate Mg(2+). A Glutamine amidotransferase type-1 domain is found at 1044-1297 (MAILREQGVN…MFQNARKNLA (254 aa)). The active-site Nucleophile is cysteine 1137. Residues histidine 1262 and glutamate 1264 contribute to the active site.

The protein in the N-terminal section; belongs to the FGAMS family. In terms of assembly, monomer.

The protein localises to the cytoplasm. It carries out the reaction N(2)-formyl-N(1)-(5-phospho-beta-D-ribosyl)glycinamide + L-glutamine + ATP + H2O = 2-formamido-N(1)-(5-O-phospho-beta-D-ribosyl)acetamidine + L-glutamate + ADP + phosphate + H(+). The protein operates within purine metabolism; IMP biosynthesis via de novo pathway; 5-amino-1-(5-phospho-D-ribosyl)imidazole from N(2)-formyl-N(1)-(5-phospho-D-ribosyl)glycinamide: step 1/2. In terms of biological role, phosphoribosylformylglycinamidine synthase involved in the purines biosynthetic pathway. Catalyzes the ATP-dependent conversion of formylglycinamide ribonucleotide (FGAR) and glutamine to yield formylglycinamidine ribonucleotide (FGAM) and glutamate. The protein is Phosphoribosylformylglycinamidine synthase of Vibrio vulnificus (strain YJ016).